Here is a 1414-residue protein sequence, read N- to C-terminus: DNA-directed RNA polymerase subunit beta' (1414 aa).

Zn(2+)-binding residues include Cys-70, Cys-72, Cys-85, and Cys-88. Mg(2+)-binding residues include Asp-460, Asp-462, and Asp-464. 4 residues coordinate Zn(2+): Cys-814, Cys-888, Cys-895, and Cys-898. Residues Glu-1392 to Ala-1403 show a composition bias toward low complexity. The interval Glu-1392 to Glu-1414 is disordered.

This sequence belongs to the RNA polymerase beta' chain family. The RNAP catalytic core consists of 2 alpha, 1 beta, 1 beta' and 1 omega subunit. When a sigma factor is associated with the core the holoenzyme is formed, which can initiate transcription. Mg(2+) is required as a cofactor. Requires Zn(2+) as cofactor.

The enzyme catalyses RNA(n) + a ribonucleoside 5'-triphosphate = RNA(n+1) + diphosphate. Its function is as follows. DNA-dependent RNA polymerase catalyzes the transcription of DNA into RNA using the four ribonucleoside triphosphates as substrates. This chain is DNA-directed RNA polymerase subunit beta', found in Coxiella burnetii (strain RSA 331 / Henzerling II).